The sequence spans 316 residues: 4-hydroxy-3-methylbut-2-enyl diphosphate reductase (316 aa).

[4Fe-4S] cluster is bound at residue C12. (2E)-4-hydroxy-3-methylbut-2-enyl diphosphate contacts are provided by H41 and H74. H41 and H74 together coordinate dimethylallyl diphosphate. Residues H41 and H74 each contribute to the isopentenyl diphosphate site. C96 contributes to the [4Fe-4S] cluster binding site. H124 contacts (2E)-4-hydroxy-3-methylbut-2-enyl diphosphate. Residue H124 coordinates dimethylallyl diphosphate. An isopentenyl diphosphate-binding site is contributed by H124. E126 serves as the catalytic Proton donor. Residue T169 coordinates (2E)-4-hydroxy-3-methylbut-2-enyl diphosphate. Residue C199 coordinates [4Fe-4S] cluster. (2E)-4-hydroxy-3-methylbut-2-enyl diphosphate contacts are provided by S227, S228, N229, and S271. The dimethylallyl diphosphate site is built by S227, S228, N229, and S271. Residues S227, S228, N229, and S271 each coordinate isopentenyl diphosphate.

It belongs to the IspH family. [4Fe-4S] cluster is required as a cofactor.

The enzyme catalyses isopentenyl diphosphate + 2 oxidized [2Fe-2S]-[ferredoxin] + H2O = (2E)-4-hydroxy-3-methylbut-2-enyl diphosphate + 2 reduced [2Fe-2S]-[ferredoxin] + 2 H(+). It catalyses the reaction dimethylallyl diphosphate + 2 oxidized [2Fe-2S]-[ferredoxin] + H2O = (2E)-4-hydroxy-3-methylbut-2-enyl diphosphate + 2 reduced [2Fe-2S]-[ferredoxin] + 2 H(+). It participates in isoprenoid biosynthesis; dimethylallyl diphosphate biosynthesis; dimethylallyl diphosphate from (2E)-4-hydroxy-3-methylbutenyl diphosphate: step 1/1. The protein operates within isoprenoid biosynthesis; isopentenyl diphosphate biosynthesis via DXP pathway; isopentenyl diphosphate from 1-deoxy-D-xylulose 5-phosphate: step 6/6. In terms of biological role, catalyzes the conversion of 1-hydroxy-2-methyl-2-(E)-butenyl 4-diphosphate (HMBPP) into a mixture of isopentenyl diphosphate (IPP) and dimethylallyl diphosphate (DMAPP). Acts in the terminal step of the DOXP/MEP pathway for isoprenoid precursor biosynthesis. In Xylella fastidiosa (strain M12), this protein is 4-hydroxy-3-methylbut-2-enyl diphosphate reductase.